The primary structure comprises 154 residues: Calmodulin-like protein 4 (154 aa).

4 consecutive EF-hand domains span residues 7–42 (EQMV…LGLE), 43–78 (PTDQ…KMKD), 80–115 (DGDE…LGEK), and 116–151 (MTDE…AERK). The Ca(2+) site is built by Asp-20, Asn-22, Asp-24, Cys-26, Glu-31, Asp-56, Asp-58, Asn-60, Glu-67, Asp-93, Asp-95, Asn-97, and Glu-104. Lys-115 bears the N6,N6,N6-trimethyllysine mark. Asp-129, Asp-131, Asp-133, Gln-135, and Glu-140 together coordinate Ca(2+).

The protein belongs to the calmodulin family.

In terms of biological role, potential calcium sensor. In Oryza sativa subsp. japonica (Rice), this protein is Calmodulin-like protein 4 (CML4).